Consider the following 361-residue polypeptide: tRNA 2-selenouridine synthase (361 aa).

The 124-residue stretch at 12-135 (VLKNIPLIDV…FRRYLIDHLE (124 aa)) folds into the Rhodanese domain. Cys-95 serves as the catalytic S-selanylcysteine intermediate.

The protein belongs to the SelU family. As to quaternary structure, monomer.

It catalyses the reaction 5-methylaminomethyl-2-thiouridine(34) in tRNA + selenophosphate + (2E)-geranyl diphosphate + H2O + H(+) = 5-methylaminomethyl-2-selenouridine(34) in tRNA + (2E)-thiogeraniol + phosphate + diphosphate. The catalysed reaction is 5-methylaminomethyl-2-thiouridine(34) in tRNA + (2E)-geranyl diphosphate = 5-methylaminomethyl-S-(2E)-geranyl-thiouridine(34) in tRNA + diphosphate. The enzyme catalyses 5-methylaminomethyl-S-(2E)-geranyl-thiouridine(34) in tRNA + selenophosphate + H(+) = 5-methylaminomethyl-2-(Se-phospho)selenouridine(34) in tRNA + (2E)-thiogeraniol. It carries out the reaction 5-methylaminomethyl-2-(Se-phospho)selenouridine(34) in tRNA + H2O = 5-methylaminomethyl-2-selenouridine(34) in tRNA + phosphate. In terms of biological role, involved in the post-transcriptional modification of the uridine at the wobble position (U34) of tRNA(Lys), tRNA(Glu) and tRNA(Gln). Catalyzes the conversion of 2-thiouridine (S2U-RNA) to 2-selenouridine (Se2U-RNA). Acts in a two-step process involving geranylation of 2-thiouridine (S2U) to S-geranyl-2-thiouridine (geS2U) and subsequent selenation of the latter derivative to 2-selenouridine (Se2U) in the tRNA chain. The sequence is that of tRNA 2-selenouridine synthase from Hydrogenovibrio crunogenus (strain DSM 25203 / XCL-2) (Thiomicrospira crunogena).